Reading from the N-terminus, the 436-residue chain is UDP-N-acetylmuramate--L-alanine ligase (436 aa).

An ATP-binding site is contributed by 108-114 (GAHGKTS).

The protein belongs to the MurCDEF family.

It is found in the cytoplasm. It catalyses the reaction UDP-N-acetyl-alpha-D-muramate + L-alanine + ATP = UDP-N-acetyl-alpha-D-muramoyl-L-alanine + ADP + phosphate + H(+). It participates in cell wall biogenesis; peptidoglycan biosynthesis. Its function is as follows. Cell wall formation. The chain is UDP-N-acetylmuramate--L-alanine ligase from Bacillus cereus (strain B4264).